The chain runs to 379 residues: UDP-N-acetylglucosamine--N-acetylmuramyl-(pentapeptide) pyrophosphoryl-undecaprenol N-acetylglucosamine transferase (379 aa).

UDP-N-acetyl-alpha-D-glucosamine contacts are provided by residues 17 to 19 (TGG), Asn128, Arg169, Ser197, and Gln298.

This sequence belongs to the glycosyltransferase 28 family. MurG subfamily.

The protein resides in the cell inner membrane. The catalysed reaction is di-trans,octa-cis-undecaprenyl diphospho-N-acetyl-alpha-D-muramoyl-L-alanyl-D-glutamyl-meso-2,6-diaminopimeloyl-D-alanyl-D-alanine + UDP-N-acetyl-alpha-D-glucosamine = di-trans,octa-cis-undecaprenyl diphospho-[N-acetyl-alpha-D-glucosaminyl-(1-&gt;4)]-N-acetyl-alpha-D-muramoyl-L-alanyl-D-glutamyl-meso-2,6-diaminopimeloyl-D-alanyl-D-alanine + UDP + H(+). The protein operates within cell wall biogenesis; peptidoglycan biosynthesis. Functionally, cell wall formation. Catalyzes the transfer of a GlcNAc subunit on undecaprenyl-pyrophosphoryl-MurNAc-pentapeptide (lipid intermediate I) to form undecaprenyl-pyrophosphoryl-MurNAc-(pentapeptide)GlcNAc (lipid intermediate II). The chain is UDP-N-acetylglucosamine--N-acetylmuramyl-(pentapeptide) pyrophosphoryl-undecaprenol N-acetylglucosamine transferase from Brucella suis biovar 1 (strain 1330).